The primary structure comprises 76 residues: Small ribosomal subunit protein bS18 (76 aa).

The protein belongs to the bacterial ribosomal protein bS18 family. Part of the 30S ribosomal subunit. Forms a tight heterodimer with protein bS6.

Functionally, binds as a heterodimer with protein bS6 to the central domain of the 16S rRNA, where it helps stabilize the platform of the 30S subunit. The protein is Small ribosomal subunit protein bS18 of Xylella fastidiosa (strain M23).